A 1006-amino-acid chain; its full sequence is Transcription factor tau subunit sfc4 (1006 aa).

The disordered stretch occupies residues 64–91 (GLWSDEESDYEGSDDESNFSKTASRTED). Residues 66–80 (WSDEESDYEGSDDES) are compositionally biased toward acidic residues. TPR repeat units follow at residues 133 to 166 (QQMLSLANHLFAQEGNFDEAQKLAEEIVRIDNNV), 205 to 238 (HELWFTCAKLSESLEFWDQADYCYNRAVSAKPPN), 277 to 310 (ASILKNLAEIYIKIHAPREILKQFEIAWKYFYQY), 396 to 429 (HLFRTKLGIARLKTGELPEAELHFSVIKNLPPDY), 431 to 464 (WGMLYDIAKAYMDIERLDLALEYFVLICNHEPAQ), and 466 to 499 (IGLWYNMGVCYLELKEYEHAQQCMEAILIVDNSN). Residues 506–554 (LAEINELQDNRDAALEIVTNIFEQRRNINELEREQSQNEDHEKNVGSQL) are a coiled coil. TPR repeat units follow at residues 841 to 874 (PVLVLLYGHIMARNRSWIPAINYYSRAFAINPDC) and 924 to 957 (QEALYNLGKAYHFIGLEHYAVKYYEAVLGLSPMS).

As to quaternary structure, component of the TFIIIC complex including sfc1, sfc3, sfc4, sfc6 and sfc7. The subunits are organized in two globular domains, tauA and tauB, connected by a proteolysis-sensitive and flexible linker. Interacts with sfc1, sfc3 and sfc6. Phosphorylated.

The protein localises to the nucleus. Its function is as follows. TFIIIC mediates tRNA and 5S RNA gene activation by binding to intragenic promoter elements. Upstream of the transcription start site, TFIIIC assembles the initiation complex TFIIIB-TFIIIC-tDNA, which is sufficient for RNA polymerase III recruitment and function. Part of the tauA domain of TFIIIC that binds boxA DNA promoter sites of tRNA and similar genes. Sfc4 is the TFIIIB assembling subunit of TFIIIC. The chain is Transcription factor tau subunit sfc4 from Schizosaccharomyces pombe (strain 972 / ATCC 24843) (Fission yeast).